The sequence spans 112 residues: S-adenosylmethionine decarboxylase proenzyme (112 aa).

The Schiff-base intermediate with substrate; via pyruvic acid role is filled by serine 62. A Pyruvic acid (Ser); by autocatalysis modification is found at serine 62. The active-site Proton acceptor; for processing activity is histidine 67. Catalysis depends on cysteine 82, which acts as the Proton donor; for catalytic activity.

Belongs to the prokaryotic AdoMetDC family. Type 1 subfamily. Heterotetramer of two alpha and two beta chains arranged as a dimer of alpha/beta heterodimers. Requires pyruvate as cofactor. Is synthesized initially as an inactive proenzyme. Formation of the active enzyme involves a self-maturation process in which the active site pyruvoyl group is generated from an internal serine residue via an autocatalytic post-translational modification. Two non-identical subunits are generated from the proenzyme in this reaction, and the pyruvate is formed at the N-terminus of the alpha chain, which is derived from the carboxyl end of the proenzyme. The post-translation cleavage follows an unusual pathway, termed non-hydrolytic serinolysis, in which the side chain hydroxyl group of the serine supplies its oxygen atom to form the C-terminus of the beta chain, while the remainder of the serine residue undergoes an oxidative deamination to produce ammonia and the pyruvoyl group blocking the N-terminus of the alpha chain.

It carries out the reaction S-adenosyl-L-methionine + H(+) = S-adenosyl 3-(methylsulfanyl)propylamine + CO2. It functions in the pathway amine and polyamine biosynthesis; S-adenosylmethioninamine biosynthesis; S-adenosylmethioninamine from S-adenosyl-L-methionine: step 1/1. Its function is as follows. Catalyzes the decarboxylation of S-adenosylmethionine to S-adenosylmethioninamine (dcAdoMet), the propylamine donor required for the synthesis of the polyamines spermine and spermidine from the diamine putrescine. The chain is S-adenosylmethionine decarboxylase proenzyme from Archaeoglobus fulgidus (strain ATCC 49558 / DSM 4304 / JCM 9628 / NBRC 100126 / VC-16).